Consider the following 73-residue polypeptide: Putative ORF9c protein (73 aa).

A helical membrane pass occupies residues 47–67 (AAVGELLLLEWLAMAVMLLLL).

Its subcellular location is the membrane. In terms of biological role, may induce apoptosis in cardiomyocytes when overexpressed ex-vivo. The polypeptide is Putative ORF9c protein (Homo sapiens (Human)).